The chain runs to 127 residues: Small ribosomal subunit protein uS11 (127 aa).

Belongs to the universal ribosomal protein uS11 family. Part of the 30S ribosomal subunit. Interacts with proteins S7 and S18. Binds to IF-3.

Its function is as follows. Located on the platform of the 30S subunit, it bridges several disparate RNA helices of the 16S rRNA. Forms part of the Shine-Dalgarno cleft in the 70S ribosome. The protein is Small ribosomal subunit protein uS11 of Rhodopirellula baltica (strain DSM 10527 / NCIMB 13988 / SH1).